Here is a 242-residue protein sequence, read N- to C-terminus: Succinyl-CoA:3-ketoacid coenzyme A transferase subunit A (242 aa).

G33 to G39 lines the CoA pocket.

The protein belongs to the 3-oxoacid CoA-transferase subunit A family. Heterodimer of a subunit A and a subunit B.

The catalysed reaction is a 3-oxo acid + succinyl-CoA = a 3-oxoacyl-CoA + succinate. It functions in the pathway bacterial outer membrane biogenesis; lipopolysaccharide biosynthesis. In Xanthomonas campestris pv. campestris (strain ATCC 33913 / DSM 3586 / NCPPB 528 / LMG 568 / P 25), this protein is Succinyl-CoA:3-ketoacid coenzyme A transferase subunit A (lpsI).